The following is a 36-amino-acid chain: Potassium channel toxin alpha-KTx 23.1 (36 aa).

Disulfide bonds link cysteine 6–cysteine 26, cysteine 12–cysteine 31, cysteine 16–cysteine 33, and cysteine 21–cysteine 36. Cysteine amide is present on cysteine 36.

The protein belongs to the short scorpion toxin superfamily. Potassium channel inhibitor family. Alpha-KTx 23 subfamily. In terms of tissue distribution, expressed by the venom gland.

The protein localises to the secreted. Functionally, voltage-gated potassium channel inhibitor. Selectively and irreversibly binds (K(d)=2.9 pM) and blocks hKv1.3/KCNA3 potassium channels of human T-lymphocytes. Weakly blocks hKCa3.1/KCNN4, mKv1.1/KCNA1, and hKv1.2/KCNA2 channels. In vivo, high doses (200 ug) produce no symptoms of intoxication when injected into mice. This chain is Potassium channel toxin alpha-KTx 23.1, found in Vaejovis mexicanus smithi (Mexican scorpion).